Here is an 830-residue protein sequence, read N- to C-terminus: Cyclin-dependent kinase inhibitor FAR1 (830 aa).

Residues 1–31 (MKTPTRVSFEKKIHTPPSGDRDAERSPPKKF) are disordered. Over residues 8–27 (SFEKKIHTPPSGDRDAERSP) the composition is skewed to basic and acidic residues. The residue at position 87 (Ser87) is a Phosphoserine; by CDC28. Phosphoserine occurs at positions 110 and 114. Residues 202–252 (CLICEESISSTFTGEKVVESTCSHTSHYNCYLMLFETLYFQGKFPECKICG) form an RING-type zinc finger. Thr306 is subject to Phosphothreonine.

As to quaternary structure, associates with the CDC28-CLN complex. In terms of processing, thought to be phosphorylated by MAP kinase FUS3. Thought to enhance the binding of FAR1 to G1-specific cyclin-dependent kinase (CDK) complexes.

Inhibitor of the cyclin-dependent kinase CDC28. Necessary for cell cycle arrest. Involved in pheromone response. Contributes to mating efficiency. Required for oriented polarization of yeast cells in response to mating pheromones. The polypeptide is Cyclin-dependent kinase inhibitor FAR1 (FAR1) (Saccharomyces cerevisiae (strain ATCC 204508 / S288c) (Baker's yeast)).